Consider the following 160-residue polypeptide: Large ribosomal subunit protein bL17 (160 aa).

Positions D123–Q141 are enriched in basic and acidic residues. Residues D123–E160 are disordered. Residues K142–G152 are compositionally biased toward low complexity.

This sequence belongs to the bacterial ribosomal protein bL17 family. Part of the 50S ribosomal subunit. Contacts protein L32.

The protein is Large ribosomal subunit protein bL17 of Acidobacterium capsulatum (strain ATCC 51196 / DSM 11244 / BCRC 80197 / JCM 7670 / NBRC 15755 / NCIMB 13165 / 161).